Reading from the N-terminus, the 89-residue chain is Small ribosomal subunit protein uS15 (89 aa).

The protein belongs to the universal ribosomal protein uS15 family. Part of the 30S ribosomal subunit. Forms a bridge to the 50S subunit in the 70S ribosome, contacting the 23S rRNA.

In terms of biological role, one of the primary rRNA binding proteins, it binds directly to 16S rRNA where it helps nucleate assembly of the platform of the 30S subunit by binding and bridging several RNA helices of the 16S rRNA. Its function is as follows. Forms an intersubunit bridge (bridge B4) with the 23S rRNA of the 50S subunit in the ribosome. The chain is Small ribosomal subunit protein uS15 from Sulfurovum sp. (strain NBC37-1).